The chain runs to 377 residues: UDP-N-acetylglucosamine--N-acetylmuramyl-(pentapeptide) pyrophosphoryl-undecaprenol N-acetylglucosamine transferase (377 aa).

Residues 11–13 (TGG), asparagine 123, arginine 164, serine 194, and glutamine 295 each bind UDP-N-acetyl-alpha-D-glucosamine.

Belongs to the glycosyltransferase 28 family. MurG subfamily.

It is found in the cell inner membrane. It carries out the reaction di-trans,octa-cis-undecaprenyl diphospho-N-acetyl-alpha-D-muramoyl-L-alanyl-D-glutamyl-meso-2,6-diaminopimeloyl-D-alanyl-D-alanine + UDP-N-acetyl-alpha-D-glucosamine = di-trans,octa-cis-undecaprenyl diphospho-[N-acetyl-alpha-D-glucosaminyl-(1-&gt;4)]-N-acetyl-alpha-D-muramoyl-L-alanyl-D-glutamyl-meso-2,6-diaminopimeloyl-D-alanyl-D-alanine + UDP + H(+). It participates in cell wall biogenesis; peptidoglycan biosynthesis. Its function is as follows. Cell wall formation. Catalyzes the transfer of a GlcNAc subunit on undecaprenyl-pyrophosphoryl-MurNAc-pentapeptide (lipid intermediate I) to form undecaprenyl-pyrophosphoryl-MurNAc-(pentapeptide)GlcNAc (lipid intermediate II). In Opitutus terrae (strain DSM 11246 / JCM 15787 / PB90-1), this protein is UDP-N-acetylglucosamine--N-acetylmuramyl-(pentapeptide) pyrophosphoryl-undecaprenol N-acetylglucosamine transferase.